The sequence spans 317 residues: Melanocyte-stimulating hormone receptor (317 aa).

Residues 1 to 37 (MPVLGSQRRLLGSLNCTPPATFPLMLAPNRTGPQCLE) are Extracellular-facing. N-linked (GlcNAc...) asparagine glycosylation is present at N29. Residues 38-63 (VSIPNGLFLSLGLVSLVENVLVVAAI) traverse the membrane as a helical segment. Over 64–72 (AKNSNLHSP) the chain is Cytoplasmic. A helical membrane pass occupies residues 73-93 (MYYFICCLAVSDLLVSVSNVL). Over 94-118 (ETAVMLLLEAGALAARAAVVQQLDN) the chain is Extracellular. Residues 119 to 140 (VIDVLICGSMVSSLCFLGAIAV) traverse the membrane as a helical segment. The Cytoplasmic portion of the chain corresponds to 141 to 163 (DRYISIFYALRYHSVVTLPRAWR). A helical transmembrane segment spans residues 164 to 183 (IIAAIWVASILTSLLFITYY). Residues 184–191 (NHTVVLLC) are Extracellular-facing. A helical transmembrane segment spans residues 192–211 (LVGFFIAMLALMAVLYVHML). The Cytoplasmic segment spans residues 212-240 (ARACQHARGIARLQKRQRPIHRGFGLKGA). Residues 241–266 (ATLTILLGVFFLCWGPFFLHLSLIVL) form a helical membrane-spanning segment. Over 267–279 (CPQHPTCGCIFKN) the chain is Extracellular. The chain crosses the membrane as a helical span at residues 280–300 (FNLFLALIICNAIVDPLIYAF). Residues 301–317 (RSQELRKTLQEVLQCSW) lie on the Cytoplasmic side of the membrane. A lipid anchor (S-palmitoyl cysteine) is attached at C315.

It belongs to the G-protein coupled receptor 1 family. As to quaternary structure, interacts with MGRN1, but does not undergo MGRN1-mediated ubiquitination; this interaction competes with GNAS-binding and thus inhibits agonist-induced cAMP production. Interacts with OPN3; the interaction results in a decrease in MC1R-mediated cAMP signaling and ultimately a decrease in melanin production in melanocytes.

The protein localises to the cell membrane. Its function is as follows. Receptor for MSH (alpha, beta and gamma) and ACTH. The activity of this receptor is mediated by G proteins which activate adenylate cyclase. Mediates melanogenesis, the production of eumelanin (black/brown) and phaeomelanin (red/yellow), via regulation of cAMP signaling in melanocytes. This chain is Melanocyte-stimulating hormone receptor (MC1R), found in Rangifer tarandus (Reindeer).